A 256-amino-acid polypeptide reads, in one-letter code: Imidazole glycerol phosphate synthase subunit HisF (256 aa).

Catalysis depends on residues aspartate 12 and aspartate 131.

This sequence belongs to the HisA/HisF family. Heterodimer of HisH and HisF.

It is found in the cytoplasm. It carries out the reaction 5-[(5-phospho-1-deoxy-D-ribulos-1-ylimino)methylamino]-1-(5-phospho-beta-D-ribosyl)imidazole-4-carboxamide + L-glutamine = D-erythro-1-(imidazol-4-yl)glycerol 3-phosphate + 5-amino-1-(5-phospho-beta-D-ribosyl)imidazole-4-carboxamide + L-glutamate + H(+). It participates in amino-acid biosynthesis; L-histidine biosynthesis; L-histidine from 5-phospho-alpha-D-ribose 1-diphosphate: step 5/9. In terms of biological role, IGPS catalyzes the conversion of PRFAR and glutamine to IGP, AICAR and glutamate. The HisF subunit catalyzes the cyclization activity that produces IGP and AICAR from PRFAR using the ammonia provided by the HisH subunit. This is Imidazole glycerol phosphate synthase subunit HisF from Bifidobacterium adolescentis (strain ATCC 15703 / DSM 20083 / NCTC 11814 / E194a).